Here is a 141-residue protein sequence, read N- to C-terminus: Hemoglobin subunit alpha (141 aa).

A Globin domain is found at 1-141; sequence VLSSADKANI…VSTVLTSKYR (141 aa). Residue serine 3 is modified to Phosphoserine. Residues lysine 7 and lysine 11 each carry the N6-succinyllysine modification. An N6-acetyllysine; alternate modification is found at lysine 16. The residue at position 16 (lysine 16) is an N6-succinyllysine; alternate. Position 24 is a phosphotyrosine (tyrosine 24). N6-succinyllysine is present on lysine 40. Serine 49 carries the phosphoserine modification. Histidine 58 is a binding site for O2. Histidine 87 provides a ligand contact to heme b. Serine 102 carries the post-translational modification Phosphoserine. Threonine 108 is modified (phosphothreonine). Position 131 is a phosphoserine (serine 131). Phosphothreonine is present on residues threonine 134 and threonine 137. A Phosphoserine modification is found at serine 138.

The protein belongs to the globin family. As to quaternary structure, heterotetramer of two alpha chains and two beta chains. As to expression, red blood cells.

Its function is as follows. Involved in oxygen transport from the lung to the various peripheral tissues. In terms of biological role, hemopressin acts as an antagonist peptide of the cannabinoid receptor CNR1. Hemopressin-binding efficiently blocks cannabinoid receptor CNR1 and subsequent signaling. The protein is Hemoglobin subunit alpha (HBA) of Crocuta crocuta (Spotted hyena).